Reading from the N-terminus, the 286-residue chain is Energy-coupling factor transporter ATP-binding protein EcfA2 (286 aa).

In terms of domain architecture, ABC transporter spans 3–244; it reads IKVENVSFIY…AERLEKIGLS (242 aa). Residue 40–47 coordinates ATP; sequence GHTGSGKS.

It belongs to the ABC transporter superfamily. Energy-coupling factor EcfA family. As to quaternary structure, forms a stable energy-coupling factor (ECF) transporter complex composed of 2 membrane-embedded substrate-binding proteins (S component), 2 ATP-binding proteins (A component) and 2 transmembrane proteins (T component).

The protein resides in the cell membrane. Functionally, ATP-binding (A) component of a common energy-coupling factor (ECF) ABC-transporter complex. Unlike classic ABC transporters this ECF transporter provides the energy necessary to transport a number of different substrates. The polypeptide is Energy-coupling factor transporter ATP-binding protein EcfA2 (Caldanaerobacter subterraneus subsp. tengcongensis (strain DSM 15242 / JCM 11007 / NBRC 100824 / MB4) (Thermoanaerobacter tengcongensis)).